The following is a 196-amino-acid chain: Mitochondrial intermembrane space cysteine motif-containing protein MIX23 (196 aa).

The short motif at 99–114 (CEKEAAEMKNETDQQC) is the Cx14C motif element. The short motif at 178-192 (CEQNNDYLKEFTQFC) is the Cx13C motif element.

The protein belongs to the MIX23 family.

It localises to the mitochondrion intermembrane space. Regulator of the mitochondrial protein import machinery that is localized in the mitochondrial intermembrane space (IMS) and facilitates the transport of proteins from the cytosol into the mitochondrial matrix. Not essential for mitochondrial protein import but induced and required when mitochondrial import is compromised. Stimulates or stabilizes the translocation into the mitochondria of proteins such as OXA1, ATP1 and COX12. The polypeptide is Mitochondrial intermembrane space cysteine motif-containing protein MIX23 (Saccharomyces cerevisiae (strain ATCC 204508 / S288c) (Baker's yeast)).